Here is a 64-residue protein sequence, read N- to C-terminus: MPKMKTKSGAAKRFLKTANGIKHKHAFKSHILTKMSTKRKRQLRGSSLLHPSDVAKVERMLRLR.

It belongs to the bacterial ribosomal protein bL35 family.

This Pseudomonas savastanoi pv. phaseolicola (strain 1448A / Race 6) (Pseudomonas syringae pv. phaseolicola (strain 1448A / Race 6)) protein is Large ribosomal subunit protein bL35.